The following is a 246-amino-acid chain: 1-(5-phosphoribosyl)-5-[(5-phosphoribosylamino)methylideneamino] imidazole-4-carboxamide isomerase (246 aa).

Asp-8 serves as the catalytic Proton acceptor. Catalysis depends on Asp-129, which acts as the Proton donor.

Belongs to the HisA/HisF family.

The protein localises to the cytoplasm. The enzyme catalyses 1-(5-phospho-beta-D-ribosyl)-5-[(5-phospho-beta-D-ribosylamino)methylideneamino]imidazole-4-carboxamide = 5-[(5-phospho-1-deoxy-D-ribulos-1-ylimino)methylamino]-1-(5-phospho-beta-D-ribosyl)imidazole-4-carboxamide. It functions in the pathway amino-acid biosynthesis; L-histidine biosynthesis; L-histidine from 5-phospho-alpha-D-ribose 1-diphosphate: step 4/9. The sequence is that of 1-(5-phosphoribosyl)-5-[(5-phosphoribosylamino)methylideneamino] imidazole-4-carboxamide isomerase from Desulforamulus reducens (strain ATCC BAA-1160 / DSM 100696 / MI-1) (Desulfotomaculum reducens).